Reading from the N-terminus, the 118-residue chain is NAD(P)H-quinone oxidoreductase subunit M (118 aa).

It belongs to the complex I NdhM subunit family. NDH-1 can be composed of about 15 different subunits; different subcomplexes with different compositions have been identified which probably have different functions.

It is found in the cellular thylakoid membrane. The enzyme catalyses a plastoquinone + NADH + (n+1) H(+)(in) = a plastoquinol + NAD(+) + n H(+)(out). The catalysed reaction is a plastoquinone + NADPH + (n+1) H(+)(in) = a plastoquinol + NADP(+) + n H(+)(out). Functionally, NDH-1 shuttles electrons from an unknown electron donor, via FMN and iron-sulfur (Fe-S) centers, to quinones in the respiratory and/or the photosynthetic chain. The immediate electron acceptor for the enzyme in this species is believed to be plastoquinone. Couples the redox reaction to proton translocation, and thus conserves the redox energy in a proton gradient. Cyanobacterial NDH-1 also plays a role in inorganic carbon-concentration. The polypeptide is NAD(P)H-quinone oxidoreductase subunit M (Trichormus variabilis (strain ATCC 29413 / PCC 7937) (Anabaena variabilis)).